Consider the following 470-residue polypeptide: Cysteine--tRNA ligase (470 aa).

A Zn(2+)-binding site is contributed by Cys30. A 'HIGH' region motif is present at residues 32–42 (PTVYNYIHIGN). 3 residues coordinate Zn(2+): Cys211, His236, and Glu240. The 'KMSKS' region signature appears at 268 to 272 (KMSKS). Lys271 contacts ATP.

This sequence belongs to the class-I aminoacyl-tRNA synthetase family. Monomer. Zn(2+) serves as cofactor.

Its subcellular location is the cytoplasm. The catalysed reaction is tRNA(Cys) + L-cysteine + ATP = L-cysteinyl-tRNA(Cys) + AMP + diphosphate. This is Cysteine--tRNA ligase from Fervidobacterium nodosum (strain ATCC 35602 / DSM 5306 / Rt17-B1).